The following is a 345-amino-acid chain: Phosphoribosylformylglycinamidine cyclo-ligase (345 aa).

The protein belongs to the AIR synthase family.

The protein resides in the cytoplasm. The enzyme catalyses 2-formamido-N(1)-(5-O-phospho-beta-D-ribosyl)acetamidine + ATP = 5-amino-1-(5-phospho-beta-D-ribosyl)imidazole + ADP + phosphate + H(+). It functions in the pathway purine metabolism; IMP biosynthesis via de novo pathway; 5-amino-1-(5-phospho-D-ribosyl)imidazole from N(2)-formyl-N(1)-(5-phospho-D-ribosyl)glycinamide: step 2/2. This chain is Phosphoribosylformylglycinamidine cyclo-ligase, found in Pseudoalteromonas atlantica (strain T6c / ATCC BAA-1087).